The primary structure comprises 102 residues: Large ribosomal subunit protein bL21 (102 aa).

This sequence belongs to the bacterial ribosomal protein bL21 family. Part of the 50S ribosomal subunit. Contacts protein L20.

This protein binds to 23S rRNA in the presence of protein L20. In Ehrlichia ruminantium (strain Welgevonden), this protein is Large ribosomal subunit protein bL21.